We begin with the raw amino-acid sequence, 213 residues long: Putative 3-methyladenine DNA glycosylase (213 aa).

The segment at 165-187 is disordered; sequence GTPVPPDQVRNGPRTGVSGDGGV.

Belongs to the DNA glycosylase MPG family.

The sequence is that of Putative 3-methyladenine DNA glycosylase from Streptomyces avermitilis (strain ATCC 31267 / DSM 46492 / JCM 5070 / NBRC 14893 / NCIMB 12804 / NRRL 8165 / MA-4680).